A 323-amino-acid polypeptide reads, in one-letter code: DNA-directed RNA polymerase subunit alpha (323 aa).

An alpha N-terminal domain (alpha-NTD) region spans residues 1–225; that stretch reads MLDIAMPKIE…QYSQTIADFN (225 aa). The interval 246-323 is alpha C-terminal domain (alpha-CTD); that stretch reads IYDTPIEELD…SHAARAEIEG (78 aa).

It belongs to the RNA polymerase alpha chain family. Homodimer. The RNAP catalytic core consists of 2 alpha, 1 beta, 1 beta' and 1 omega subunit. When a sigma factor is associated with the core the holoenzyme is formed, which can initiate transcription.

It catalyses the reaction RNA(n) + a ribonucleoside 5'-triphosphate = RNA(n+1) + diphosphate. DNA-dependent RNA polymerase catalyzes the transcription of DNA into RNA using the four ribonucleoside triphosphates as substrates. The sequence is that of DNA-directed RNA polymerase subunit alpha from Roseiflexus sp. (strain RS-1).